The sequence spans 154 residues: Phosphopantetheine adenylyltransferase (154 aa).

Belongs to the eukaryotic CoaD family.

The protein localises to the cytoplasm. It carries out the reaction (R)-4'-phosphopantetheine + ATP + H(+) = 3'-dephospho-CoA + diphosphate. It participates in cofactor biosynthesis; coenzyme A biosynthesis. Its function is as follows. Reversibly transfers an adenylyl group from ATP to 4'-phosphopantetheine, yielding dephospho-CoA (dPCoA) and pyrophosphate. The sequence is that of Phosphopantetheine adenylyltransferase from Methanosarcina mazei (strain ATCC BAA-159 / DSM 3647 / Goe1 / Go1 / JCM 11833 / OCM 88) (Methanosarcina frisia).